A 208-amino-acid chain; its full sequence is Outer-membrane lipoprotein carrier protein (208 aa).

The first 21 residues, 1–21 (MKRTATLLVVALILALNTAQA), serve as a signal peptide directing secretion.

Belongs to the LolA family. As to quaternary structure, monomer.

The protein localises to the periplasm. Participates in the translocation of lipoproteins from the inner membrane to the outer membrane. Only forms a complex with a lipoprotein if the residue after the N-terminal Cys is not an aspartate (The Asp acts as a targeting signal to indicate that the lipoprotein should stay in the inner membrane). In Halorhodospira halophila (strain DSM 244 / SL1) (Ectothiorhodospira halophila (strain DSM 244 / SL1)), this protein is Outer-membrane lipoprotein carrier protein.